We begin with the raw amino-acid sequence, 196 residues long: Probable malonic semialdehyde reductase RutE (196 aa).

Belongs to the nitroreductase family. HadB/RutE subfamily. The cofactor is FMN.

The catalysed reaction is 3-hydroxypropanoate + NADP(+) = 3-oxopropanoate + NADPH + H(+). Functionally, may reduce toxic product malonic semialdehyde to 3-hydroxypropionic acid, which is excreted. In Escherichia coli (strain K12 / MC4100 / BW2952), this protein is Probable malonic semialdehyde reductase RutE.